The following is a 335-amino-acid chain: MGRLILEHTLQGHKGRIWGVAWHPKGNVFASCGEDKAIRIWSLTGSTWSTKTILSDGHKRTIREIRWSPCGQYLASASFDATTAIWSKSSGEFECNATLEGHENEVKSVSWSRSGGLLATCSRDKSVWIWEVAGDDEFECAAVLNSHTQDVKRVVWHPTKEVLASASYDNTIKMYAEDPVDNDWDCTATLTSHTSTIWGIDFDADGERLVSCSDDTTIKIWKAYHPGNSAGVATPDQQTVWKCVCTLSGQHSRAIYDVSWCKLTGLIATACGDDGIRIFKETSDSKPDEPTFEQLTAEEGAHDQDVNSVQWNPVVAGQLISCSDDGTIKIWKVTE.

WD repeat units follow at residues 12-51 (GHKGRIWGVAWHPKGNVFASCGEDKAIRIWSLTGSTWSTK), 57-96 (GHKRTIREIRWSPCGQYLASASFDATTAIWSKSSGEFECN), 101-140 (GHENEVKSVSWSRSGGLLATCSRDKSVWIWEVAGDDEFEC), 146-185 (SHTQDVKRVVWHPTKEVLASASYDNTIKMYAEDPVDNDWD), 192-231 (SHTSTIWGIDFDADGERLVSCSDDTTIKIWKAYHPGNSAG), 250-289 (QHSRAIYDVSWCKLTGLIATACGDDGIRIFKETSDSKPDE), and 301-335 (AHDQDVNSVQWNPVVAGQLISCSDDGTIKIWKVTE).

The protein belongs to the WD repeat CIA1 family.

In terms of biological role, essential component of the cytosolic iron-sulfur (Fe/S) protein assembly machinery. Required for the maturation of extramitochondrial Fe/S proteins. The chain is Probable cytosolic iron-sulfur protein assembly protein Ciao1 from Drosophila erecta (Fruit fly).